The sequence spans 464 residues: MMARRDPTSWAKRLVRAQTLQKQRRAPVGPRAPPPDEEDPRLKCKNCGAFGHTARSTRCPMKCWKAALVPATLGKKEGKENLKPWKPRVEANPGPLNKDKGEKEERPRQQDPQRKALLHMFSGKPPEKPLPNGKGSTEPSDYLRVASGPMPVHTTSKRPRVDPVLADGSATEMSDRGSVLASLSPLRKASLSSSSSLGPKERQTGAAADMPQPAVRHQGREPLLVVKPTHSRPEGGCREVPQAASKTHGLLQAARPQAQDKRPAVTSQPCPPAATHSLGLGSNLSFGPGAKRPAQAPIQACLNFPKKPRLGPFQIPESAIQGGELGAPENLQPPPAATELGPSTSPQMGRRTPAQVPSVDRQPPHSRPCLPTAQACTMSHHPAASHDGAQPLRVLFRRLENGRWSSSLLAAPSFHSPEKPGAFLAQSPHVSEKSEAPCVRVPPSVLYEDLQVSSSSEDSDSDLE.

Disordered stretches follow at residues 16 to 42 (RAQT…DPRL), 70 to 389 (PATL…HDGA), and 415 to 437 (HSPE…SEAP). Basic and acidic residues-rich tracts occupy residues 74-89 (GKKE…KPRV) and 97-114 (NKDK…DPQR). The span at 180 to 197 (LASLSPLRKASLSSSSSL) shows a compositional bias: low complexity.

The protein belongs to the FAM90 family.

This chain is Protein FAM90A5, found in Homo sapiens (Human).